The chain runs to 306 residues: Agmatinase (306 aa).

The Mn(2+) site is built by His-126, Asp-149, His-151, Asp-153, Asp-230, and Asp-232.

It belongs to the arginase family. Agmatinase subfamily. It depends on Mn(2+) as a cofactor.

The enzyme catalyses agmatine + H2O = urea + putrescine. The protein operates within amine and polyamine biosynthesis; putrescine biosynthesis via agmatine pathway; putrescine from agmatine: step 1/1. In terms of biological role, catalyzes the formation of putrescine from agmatine. The polypeptide is Agmatinase (Salmonella agona (strain SL483)).